The chain runs to 132 residues: Fluoride-specific ion channel FluC 3 (132 aa).

The next 4 membrane-spanning stretches (helical) occupy residues 4–24 (ILLV…FGGW), 32–52 (FPVG…LIMY), 66–86 (IFLT…GYES), and 95–115 (LMLM…AVYL). Residues glycine 74 and threonine 77 each coordinate Na(+).

This sequence belongs to the fluoride channel Fluc/FEX (TC 1.A.43) family.

Its subcellular location is the cell membrane. It catalyses the reaction fluoride(in) = fluoride(out). Na(+) is not transported, but it plays an essential structural role and its presence is essential for fluoride channel function. Its function is as follows. Fluoride-specific ion channel. Important for reducing fluoride concentration in the cell, thus reducing its toxicity. The polypeptide is Fluoride-specific ion channel FluC 3 (Methanosarcina barkeri (strain Fusaro / DSM 804)).